Here is a 444-residue protein sequence, read N- to C-terminus: 3-phosphoshikimate 1-carboxyvinyltransferase (444 aa).

Residues Lys-29, Ser-30, and Arg-34 each coordinate 3-phosphoshikimate. Residue Lys-29 coordinates phosphoenolpyruvate. Residues Gly-102 and Arg-131 each coordinate phosphoenolpyruvate. 4 residues coordinate 3-phosphoshikimate: Ser-176, Gln-178, Asp-326, and Lys-353. Gln-178 contacts phosphoenolpyruvate. The active-site Proton acceptor is Asp-326. Phosphoenolpyruvate is bound by residues Arg-357 and Arg-399.

Belongs to the EPSP synthase family. In terms of assembly, monomer.

The protein localises to the cytoplasm. The enzyme catalyses 3-phosphoshikimate + phosphoenolpyruvate = 5-O-(1-carboxyvinyl)-3-phosphoshikimate + phosphate. The protein operates within metabolic intermediate biosynthesis; chorismate biosynthesis; chorismate from D-erythrose 4-phosphate and phosphoenolpyruvate: step 6/7. Its function is as follows. Catalyzes the transfer of the enolpyruvyl moiety of phosphoenolpyruvate (PEP) to the 5-hydroxyl of shikimate-3-phosphate (S3P) to produce enolpyruvyl shikimate-3-phosphate and inorganic phosphate. The protein is 3-phosphoshikimate 1-carboxyvinyltransferase of Synechococcus sp. (strain JA-3-3Ab) (Cyanobacteria bacterium Yellowstone A-Prime).